The primary structure comprises 482 residues: E1B 55 kDa protein (482 aa).

The segment at 73-94 is disordered; that stretch reads VLDSGEGPSCADDRDKQEKKES. A compositionally biased stretch (basic and acidic residues) spans 83–94; that stretch reads ADDRDKQEKKES. Residues Ser-476 and Ser-477 each carry the phosphoserine modification.

Belongs to the adenoviridae E1B 55 kDa protein family. In terms of assembly, interacts with host PML-4 and PML-5; this interaction promotes efficient subnuclear targeting of E1B-55K to PML nuclear bodies. Interacts with E4-ORF3 protein. Interacts with E4-ORF6 protein.

The protein resides in the host nucleus. It is found in the host cytoplasm. Functionally, plays a major role to prevent cellular inhibition of viral genome replication. Assembles an SCF-like E3 ubiquitin ligase complex based on the cellular proteins ELOB, ELOC, CUL5 and RBX1, in cooperation with viral E4orf6. This viral RING-type ligase ubiquitinates cellular substrates and targets them to proteasomal degradation: TP53/p53, LIG4, MRE11-RAD50-NBS1 (MRN) complex, ITGA3, DAXX and BLM. E1B-55K probably acts as the substrate-specific adapter of the SCF-like E3 ubiquitin ligase complex. Degradation of host TP53/p53 activity is essential for preventing E1A-induced TP53 accumulation that would otherwise lead to cell apoptosis and growth arrest. E1B-55K also inactivates TP53 transcription-factor activity by binding its transactivation domain. E1B-55K also functions as a SUMO1 E3 ligase for TP53 which causes the latter to be sequestered in promyelocytic leukemia (PML) nuclear bodies thereby contributing to maximal inhibition of TP53 function. This is E1B 55 kDa protein from Homo sapiens (Human).